The chain runs to 407 residues: tRNA pseudouridine synthase 4 (407 aa).

Residues 83–105 are disordered; that stretch reads FRPAPPHPNDRNRRRRKSNRLPD. The active-site Nucleophile is the Asp-115. A disordered region spans residues 274–298; the sequence is TEQDINPQDGDEKINAKSPTTNSVT. Position 291 is a phosphoserine (Ser-291). A Phosphothreonine modification is found at Thr-293. Residue Ser-296 is modified to Phosphoserine. Thr-406 bears the Phosphothreonine mark.

It belongs to the pseudouridine synthase TruB family.

Its subcellular location is the nucleus. It localises to the mitochondrion. It catalyses the reaction uridine(55) in tRNA = pseudouridine(55) in tRNA. The catalysed reaction is a uridine in mRNA = a pseudouridine in mRNA. Its function is as follows. Responsible for synthesis of pseudouridine from uracil-55 in the psi GC loop of transfer RNAs. Also catalyzes pseudouridylation of mRNAs with the consensus sequence 5'-GGUUCRA-3'. This is tRNA pseudouridine synthase 4 from Schizosaccharomyces pombe (strain 972 / ATCC 24843) (Fission yeast).